We begin with the raw amino-acid sequence, 247 residues long: Peptidyl-prolyl cis-trans isomerase FKBP17-2, chloroplastic (247 aa).

Residues 1–79 (MANLFTATAP…SSLTRRFGIG (79 aa)) constitute a chloroplast transit peptide. Residues 26 to 64 (QCYASSSNPPEPESSSPPPPPPPPQPLASQQKRKKNVET) form a disordered region. Over residues 34–51 (PPEPESSSPPPPPPPPQP) the composition is skewed to pro residues. A PPIase FKBP-type domain is found at 141–243 (GDLVVIDLKG…EYIVEIDRVS (103 aa)).

This sequence belongs to the FKBP-type PPIase family.

Its subcellular location is the plastid. It localises to the chloroplast thylakoid lumen. It catalyses the reaction [protein]-peptidylproline (omega=180) = [protein]-peptidylproline (omega=0). PPIases accelerate the folding of proteins. It catalyzes the cis-trans isomerization of proline imidic peptide bonds in oligopeptides. The protein is Peptidyl-prolyl cis-trans isomerase FKBP17-2, chloroplastic (FKBP17-2) of Arabidopsis thaliana (Mouse-ear cress).